Here is a 3898-residue protein sequence, read N- to C-terminus: Genome polyprotein (3898 aa).

A Peptidase C53 domain is found at 1 to 168 (MELNHFELLY…TNCPLWVTSC (168 aa)). Catalysis depends on for N-terminal protease activity residues E22, H49, and C69. The segment at 32–54 (LFGNPSEVHPQSTLKLPHDRGRG) is disordered. The zinc-binding TRASH domain stretch occupies residues 112 to 138 (CEVTKRIGRVTGSDGKLYHIYVCVDGC). N157 carries N-linked (GlcNAc...) asparagine; by host glycosylation. 2 disordered regions span residues 170–206 (DDGASGSKDKKPDRMNKGKLKIAPREHEKDSKTKPPD) and 221–242 (KGKVKGKNTQDGLYHNKNKPPE). 2 stretches are compositionally biased toward basic and acidic residues: residues 176–185 (SKDKKPDRMN) and 192–204 (APREHEKDSKTKP). N-linked (GlcNAc...) asparagine; by host glycans are attached at residues N269, N274, N278, N293, and N332. 2 disulfide bridges follow: C305-C349 and C335-C336. Residues N362 and N367 are each glycosylated (N-linked (GlcNAc...) asparagine; by host). Intrachain disulfides connect C377–C422 and C381–C405. N410, N425, N500, and N594 each carry an N-linked (GlcNAc...) asparagine; by host glycan. A disulfide bridge connects residues C693 and C737. N-linked (GlcNAc...) asparagine; by host glycosylation is found at N805, N810, N874, N918, N949, and N986. The next 9 membrane-spanning stretches (helical) occupy residues 1031–1051 (FVVLVVVALLGGRYVLWLIVT), 1070–1090 (VVLIGNLITHTDNEVVVYFLL), 1104–1124 (ILLLFHAMTNNPVKTITVALL), 1140–1164 (QRQPVTSFDIQLALAVVVVVVMLLA), 1189–1209 (FSTDLVIATVSAALLTWTYIS), 1217–1237 (WLQYLVSTVTGIFLIRVLKGI), 1247–1267 (LPSHRPLFYILVYLISTAVVT), 1281–1301 (VPTLLMVFTMWADILTLILIL), and 1360–1380 (TMLPLIKAILISCISNKWQLI). In terms of domain architecture, Peptidase C74 spans 1441 to 1589 (KELIIKHKVR…DLEHLGWVLR (149 aa)). Active-site for cysteine protease NS2 activity residues include H1447, E1461, and C1512. The helical transmembrane segment at 1568–1588 (MLLVGNLGTEIGDLEHLGWVL) threads the bilayer. In terms of domain architecture, Peptidase S31 spans 1590–1763 (GPAVCKKVTE…LPIFEASSGR (174 aa)). Catalysis depends on charge relay system; for serine protease NS3 activity residues H1658 and D1695. N-linked (GlcNAc...) asparagine; by host glycosylation occurs at N1713. S1752 serves as the catalytic Charge relay system; for serine protease NS3 activity. In terms of domain architecture, Helicase ATP-binding spans 1802–1960 (ITTMNRGEFR…QKHPIEEFIA (159 aa)). Position 1815–1822 (1815–1822 (LATGAGKT)) interacts with ATP. A DEAH box motif is present at residues 1910-1913 (DEYH). Residues 1978 to 2179 (GLKIPVEEMK…ELPMAVKNIM (202 aa)) form the Helicase C-terminal domain. 8 N-linked (GlcNAc...) asparagine; by host glycosylation sites follow: N2134, N2217, N2494, N2787, N2815, N2891, N3211, and N3316. GTP contacts are provided by T3500 and L3502. The RdRp catalytic domain occupies 3519-3642 (PVAVSFDTKA…ITERALGEKF (124 aa)). A glycan (N-linked (GlcNAc...) asparagine; by host) is linked at N3689. Residue R3697 coordinates GTP. N3698 carries N-linked (GlcNAc...) asparagine; by host glycosylation. K3705 serves as a coordination point for GTP. A glycan (N-linked (GlcNAc...) asparagine; by host) is linked at N3794.

The protein belongs to the pestivirus polyprotein family. As to quaternary structure, interacts (via N-terminus) with host SP1; this interaction induces proteasomal degradation of SP1 with subsequent down-regulation of HDAC1 and ISG15 expression thereby counteracting the host innate immunity. Interacts (via C-terminus) with host IRF3. In terms of assembly, interacts with host OS9. Homodimer; disulfide-linked. Interacts with host RPSA. As to quaternary structure, homodimer; disulfide-linked. Heterodimer with E1; disulfide-linked. In terms of assembly, homodimer; disulfide-linked. Heterodimer with E1; disulfide-linked. Interacts with host TRX2. Interacts with host receptor ADAM17 (via metalloproteinase domain); this interaction allows binding and probably entry of the virus into the host cell. Interacts with host ANXA2; this interaction allows binding and probably entry of the virus into the host cell. Interacts with host MERTK; this interaction allows binding and probably entry of the virus into the host cell. Interacts with host TRAF6; this interaction inhibits host NF-kappa-B pathway. Interacts with NS5B; this interaction enhances RNA-dependent RNA polymerase activity. Interacts with protein NS4A. As to quaternary structure, interacts with host RAB5, this interaction facilitates the formation of NS4B-related complex. Interacts with host FTH1; this interaction plays a positive role in viral anti-apoptosis. In terms of assembly, interacts with RNA-directed RNA polymerase. Interacts with host RSAD2; this interaction inhibits viral replication. Interacts with NS5A; this interaction promotes viral replication. Heavily glycosylated. In terms of processing, the viral RNA of pestiviruses is expressed as a single polyprotein which undergoes post-translational proteolytic processing resulting in the production of at least eleven individual proteins. The N-terminal protease cleaves itself from the nascent polyprotein autocatalytically and thereby generates the N-terminus of the adjacent viral capsid protein C. Post-translationally, cleavage between E2 and p7 is partial.

It is found in the host cytoplasm. Its subcellular location is the virion. It localises to the host cell membrane. The protein resides in the virion membrane. The protein localises to the host cell surface. It is found in the host membrane. It catalyses the reaction Leu is conserved at position P1 for all four cleavage sites. Alanine is found at position P1' of the NS4A-NS4B cleavage site, whereas serine is found at position P1' of the NS3-NS4A, NS4B-NS5A and NS5A-NS5B cleavage sites.. It carries out the reaction RNA(n) + a ribonucleoside 5'-triphosphate = RNA(n+1) + diphosphate. The enzyme catalyses a ribonucleoside 5'-triphosphate + H2O = a ribonucleoside 5'-diphosphate + phosphate + H(+). The catalysed reaction is ATP + H2O = ADP + phosphate + H(+). Its function is as follows. Leader cysteine autoprotease that cleaves itself from the nascent polyprotein during translation of the viral mRNA. Once released, plays a role in the inhibition of host innate immune response by interacting with host IRF3 and inducing its proteasomal degradation. Functionally, packages viral RNA to form a viral nucleocapsid and thereby protects viral RNA. Also plays a role in transcription regulation. Protects the incoming virus against IFN-induced effectors. Plays a role in viral entry. Interacts with host RPSA that acts as a cellular attachment receptor for the virus. Also possesses intrinsic ribonuclease (RNase) activity that can inhibit the production of type I interferon and assist in the development of persistent infections. Cleaves preferentially NpU bonds. Binds to heparan sulfate on the host cells for entry. In terms of biological role, plays a role in cell attachment and subsequent fusion of viral and cellular membranes. Therefore, mediates together with envelope glycoprotein E2 the viral entry. Its function is as follows. Plays a role in cell attachment and subsequent fusion of viral and cellular membranes. Therefore, mediates together with envelope glycoprotein E1 the viral entry. Binds to host ADAM17 receptor for entry. Binds to host ANXA2 for entry. Binds to host MERTK for entry. Functionally, plays an essential role in the virus replication cycle by acting as a viroporin. Forms ion conductive pores, which alters the cell permeability allowing the transport of ions and other small molecules. Autoprotease that associates with the host chaperone JIV and cleaves the NS2-3 protein between NS2 and NS3. Also plays a role in the formation of infectious particles. In terms of biological role, plays a role in the regulation of viral RNA replication. Its function is as follows. Multifunctional protein that contains an N-terminal protease and a C-terminal helicase, playing essential roles in viral polyprotein processing and viral genome replication. The chymotrypsin-like serine protease activity utilizes NS4A as an essential cofactor and catalyzes the cleavage of the polyprotein leading to the release of NS4A, NS4B, NS5A, and NS5B. Plays a role in the inhibition of host NF-kappa-B activation by interacting with and inhibiting host TRAF6. Interacts with NS5B to enhance RNA-dependent RNA polymerase activity. Functionally, acts as a cofactor for the NS3 protease activity. Induces a specific membrane alteration that serves as a scaffold for the virus replication complex. Antagonizes host cell apoptosis by interacting with host ferritin heavy chain. The ORF4 protein physically binds host FTH1/FHC, resulting in the reduction of FTH1 protein levels in host cells. Reduction of FTH1 concentration further inhibits the accumulation of reactive oxygen in host cells, leading to reduced apoptosis. In terms of biological role, regulates viral RNA replication by interacting with the 3'-untranslated region of viral RNA in a dose-dependent manner. At small concentrations promotes viral synthesis by interacting with the polymerase NS5B while at large concentrations, inhibits replication. Its function is as follows. Replicates the viral (+) and (-) genome. This is Genome polyprotein from Classical swine fever virus (strain Alfort/Tuebingen) (CSFV).